A 257-amino-acid chain; its full sequence is Putative hydro-lyase Bcen2424_3550 (257 aa).

Belongs to the D-glutamate cyclase family.

In Burkholderia cenocepacia (strain HI2424), this protein is Putative hydro-lyase Bcen2424_3550.